We begin with the raw amino-acid sequence, 36 residues long: Potassium channel toxin alpha-KTx 16.1 (36 aa).

3 disulfides stabilise this stretch: cysteine 7–cysteine 28, cysteine 13–cysteine 33, and cysteine 17–cysteine 35.

This sequence belongs to the short scorpion toxin superfamily. Potassium channel inhibitor family. Alpha-KTx 16 subfamily. Expressed by the venom gland.

The protein resides in the secreted. Its function is as follows. Blocks calcium-activated potassium channels. The polypeptide is Potassium channel toxin alpha-KTx 16.1 (Hottentotta tamulus (Eastern Indian scorpion)).